Here is a 373-residue protein sequence, read N- to C-terminus: 3-dehydroquinate synthase (373 aa).

NAD(+) is bound by residues 67–72, 101–105, 125–126, K138, and K147; these read EGEETK, GVILD, and TT. The Zn(2+) site is built by E180, H240, and H256.

The protein belongs to the sugar phosphate cyclases superfamily. Dehydroquinate synthase family. NAD(+) serves as cofactor. Requires Co(2+) as cofactor. It depends on Zn(2+) as a cofactor.

The protein resides in the cytoplasm. It carries out the reaction 7-phospho-2-dehydro-3-deoxy-D-arabino-heptonate = 3-dehydroquinate + phosphate. Its pathway is metabolic intermediate biosynthesis; chorismate biosynthesis; chorismate from D-erythrose 4-phosphate and phosphoenolpyruvate: step 2/7. Functionally, catalyzes the conversion of 3-deoxy-D-arabino-heptulosonate 7-phosphate (DAHP) to dehydroquinate (DHQ). The sequence is that of 3-dehydroquinate synthase from Chlamydia trachomatis serovar L2 (strain ATCC VR-902B / DSM 19102 / 434/Bu).